A 156-amino-acid polypeptide reads, in one-letter code: Snaclec A14 (156 aa).

An N-terminal signal peptide occupies residues 1-23 (MGRFIFVRVGLLVVFLSLSGTGA). 3 disulfide bridges follow: Cys27–Cys38, Cys55–Cys152, and Cys127–Cys144. Residues 34–153 (YDQHCYKAFD…CGDDYPFVCK (120 aa)) enclose the C-type lectin domain. Residue Asn141 is glycosylated (N-linked (GlcNAc...) asparagine).

This sequence belongs to the snaclec family. Heterodimer; disulfide-linked. As to expression, expressed by the venom gland.

Its subcellular location is the secreted. In terms of biological role, interferes with one step of hemostasis (modulation of platelet aggregation, or coagulation cascade, for example). In Macrovipera lebetinus (Levantine viper), this protein is Snaclec A14.